The sequence spans 48 residues: Small polypeptide DEVIL 22 (48 aa).

A helical transmembrane segment spans residues 7–23 (KLNKGHAFTSKCASLVK). Residues 13 to 44 (AFTSKCASLVKEQRARLYILRRCATMLCCWYI) form a required for DVL/RTFL small polypeptide activity region.

This sequence belongs to the DVL/RTFL small polypeptides family.

Its subcellular location is the cell membrane. Functionally, small polypeptide acting as a regulatory molecule which coordinates cellular responses required for differentiation, growth and development, probably by restricting polar cell proliferation in lateral organs and coordinating socket cell recruitment and differentiation at trichome sites. The protein is Small polypeptide DEVIL 22 of Arabidopsis thaliana (Mouse-ear cress).